Reading from the N-terminus, the 354-residue chain is 3-dehydroquinate synthase (354 aa).

Residues 100 to 104 (GATGD), 124 to 125 (TT), K136, K145, and 163 to 166 (FLKT) each bind NAD(+). Positions 178, 242, and 256 each coordinate Zn(2+).

The protein belongs to the sugar phosphate cyclases superfamily. Dehydroquinate synthase family. The cofactor is NAD(+). Requires Co(2+) as cofactor. Zn(2+) is required as a cofactor.

It is found in the cytoplasm. The enzyme catalyses 7-phospho-2-dehydro-3-deoxy-D-arabino-heptonate = 3-dehydroquinate + phosphate. It participates in metabolic intermediate biosynthesis; chorismate biosynthesis; chorismate from D-erythrose 4-phosphate and phosphoenolpyruvate: step 2/7. Its function is as follows. Catalyzes the conversion of 3-deoxy-D-arabino-heptulosonate 7-phosphate (DAHP) to dehydroquinate (DHQ). This Staphylococcus aureus (strain Mu50 / ATCC 700699) protein is 3-dehydroquinate synthase.